The chain runs to 204 residues: Cytochrome c oxidase subunit 3 (204 aa).

5 helical membrane passes run 12-32, 56-76, 101-121, 133-153, and 171-191; these read YGNL…IQWW, GMML…WAYF, FQIP…VTWA, AIHS…LQMM, and FFVA…FLFM.

This sequence belongs to the cytochrome c oxidase subunit 3 family. In terms of assembly, component of the cytochrome c oxidase (complex IV, CIV), a multisubunit enzyme composed of a catalytic core of 3 subunits and several supernumerary subunits. The complex exists as a monomer or a dimer and forms supercomplexes (SCs) in the inner mitochondrial membrane with ubiquinol-cytochrome c oxidoreductase (cytochrome b-c1 complex, complex III, CIII).

It localises to the mitochondrion inner membrane. It catalyses the reaction 4 Fe(II)-[cytochrome c] + O2 + 8 H(+)(in) = 4 Fe(III)-[cytochrome c] + 2 H2O + 4 H(+)(out). Functionally, component of the cytochrome c oxidase, the last enzyme in the mitochondrial electron transport chain which drives oxidative phosphorylation. The respiratory chain contains 3 multisubunit complexes succinate dehydrogenase (complex II, CII), ubiquinol-cytochrome c oxidoreductase (cytochrome b-c1 complex, complex III, CIII) and cytochrome c oxidase (complex IV, CIV), that cooperate to transfer electrons derived from NADH and succinate to molecular oxygen, creating an electrochemical gradient over the inner membrane that drives transmembrane transport and the ATP synthase. Cytochrome c oxidase is the component of the respiratory chain that catalyzes the reduction of oxygen to water. Electrons originating from reduced cytochrome c in the intermembrane space (IMS) are transferred via the dinuclear copper A center (CU(A)) of subunit 2 and heme A of subunit 1 to the active site in subunit 1, a binuclear center (BNC) formed by heme A3 and copper B (CU(B)). The BNC reduces molecular oxygen to 2 water molecules using 4 electrons from cytochrome c in the IMS and 4 protons from the mitochondrial matrix. The polypeptide is Cytochrome c oxidase subunit 3 (COIII) (Enteroctopus dofleini (North Pacific giant octopus)).